The following is a 260-amino-acid chain: Histidinol-phosphatase (260 aa).

Mg(2+) contacts are provided by glutamate 67, aspartate 83, isoleucine 85, and aspartate 86. Position 67 (glutamate 67) interacts with substrate. Substrate-binding positions include 85 to 88 (IDGT), arginine 185, and aspartate 213. Aspartate 213 provides a ligand contact to Mg(2+).

This sequence belongs to the inositol monophosphatase superfamily. The cofactor is Mg(2+).

The enzyme catalyses L-histidinol phosphate + H2O = L-histidinol + phosphate. The protein operates within amino-acid biosynthesis; L-histidine biosynthesis; L-histidine from 5-phospho-alpha-D-ribose 1-diphosphate: step 8/9. Catalyzes the dephosphorylation of histidinol-phosphate to histidinol, the direct precursor of histidine. The chain is Histidinol-phosphatase (hisN) from Mycobacterium tuberculosis (strain ATCC 25618 / H37Rv).